We begin with the raw amino-acid sequence, 642 residues long: Threonine--tRNA ligase (642 aa).

In terms of domain architecture, TGS spans 1 to 61 (MPVIRFYDGS…REDAFIEFVD (61 aa)). The interval 243–534 (DHRKIGKFLQ…LIEECSGNLP (292 aa)) is catalytic. The Zn(2+) site is built by C334, H385, and H511.

The protein belongs to the class-II aminoacyl-tRNA synthetase family. Homodimer. The cofactor is Zn(2+).

Its subcellular location is the cytoplasm. It catalyses the reaction tRNA(Thr) + L-threonine + ATP = L-threonyl-tRNA(Thr) + AMP + diphosphate + H(+). Catalyzes the attachment of threonine to tRNA(Thr) in a two-step reaction: L-threonine is first activated by ATP to form Thr-AMP and then transferred to the acceptor end of tRNA(Thr). Also edits incorrectly charged L-seryl-tRNA(Thr). The chain is Threonine--tRNA ligase from Buchnera aphidicola subsp. Acyrthosiphon pisum (strain APS) (Acyrthosiphon pisum symbiotic bacterium).